Consider the following 152-residue polypeptide: UPF0225 protein YchJ (152 aa).

This sequence belongs to the UPF0225 family.

This Salmonella gallinarum (strain 287/91 / NCTC 13346) protein is UPF0225 protein YchJ.